Consider the following 503-residue polypeptide: ATP synthase subunit alpha (503 aa).

Residue 170-177 coordinates ATP; sequence GDKQTGKT.

It belongs to the ATPase alpha/beta chains family. As to quaternary structure, F-type ATPases have 2 components, CF(1) - the catalytic core - and CF(0) - the membrane proton channel. CF(1) has five subunits: alpha(3), beta(3), gamma(1), delta(1), epsilon(1). CF(0) has three main subunits: a(1), b(2) and c(9-12). The alpha and beta chains form an alternating ring which encloses part of the gamma chain. CF(1) is attached to CF(0) by a central stalk formed by the gamma and epsilon chains, while a peripheral stalk is formed by the delta and b chains.

It localises to the cell inner membrane. The enzyme catalyses ATP + H2O + 4 H(+)(in) = ADP + phosphate + 5 H(+)(out). In terms of biological role, produces ATP from ADP in the presence of a proton gradient across the membrane. The alpha chain is a regulatory subunit. The sequence is that of ATP synthase subunit alpha from Helicobacter pylori (strain P12).